Consider the following 190-residue polypeptide: Bifunctional protein PyrR (190 aa).

A PRPP-binding motif is present at residues 112 to 124; sequence VILVDDVLYSGRS.

The protein belongs to the purine/pyrimidine phosphoribosyltransferase family. PyrR subfamily.

The enzyme catalyses UMP + diphosphate = 5-phospho-alpha-D-ribose 1-diphosphate + uracil. Functionally, regulates the transcription of the pyrimidine nucleotide (pyr) operon in response to exogenous pyrimidines. Also displays a weak uracil phosphoribosyltransferase activity which is not physiologically significant. This chain is Bifunctional protein PyrR, found in Mycolicibacterium paratuberculosis (strain ATCC BAA-968 / K-10) (Mycobacterium paratuberculosis).